A 337-amino-acid chain; its full sequence is Protein-arginine kinase (337 aa).

One can recognise a Phosphagen kinase C-terminal domain in the interval 8–239 (VVLSSRIRLA…KQIISSERRA (232 aa)). ATP-binding positions include 11–15 (SSRIR), His76, Arg110, 161–165 (RASVM), and 192–197 (RGIYGE). Residues 321–326 (RDVKRA) carry the RDXXRA motif of the pArg binding pocket involved in allosteric regulation motif.

Belongs to the ATP:guanido phosphotransferase family.

It carries out the reaction L-arginyl-[protein] + ATP = N(omega)-phospho-L-arginyl-[protein] + ADP + H(+). With respect to regulation, appears to be allosterically activated by the binding of pArg-containing polypeptides to the pArg-binding pocket localized in the C-terminal domain of McsB. Its function is as follows. Catalyzes the specific phosphorylation of arginine residues in proteins. The chain is Protein-arginine kinase from Caldanaerobacter subterraneus subsp. tengcongensis (strain DSM 15242 / JCM 11007 / NBRC 100824 / MB4) (Thermoanaerobacter tengcongensis).